The primary structure comprises 123 residues: Protein Wnt-3a (123 aa).

A lipid anchor (O-palmitoleoyl serine) is attached at serine 1. Cysteine 89 and cysteine 104 are disulfide-bonded. Residue asparagine 90 is glycosylated (N-linked (GlcNAc...) asparagine).

The protein belongs to the Wnt family. Disulfide bonds have critical and distinct roles in secretion and activity. Loss of each conserved cysteine results in high molecular weight oxidized Wnt oligomers, which are formed through inter-Wnt disulfide bonding. Post-translationally, palmitoleoylation is required for efficient binding to frizzled receptors. Depalmitoleoylation leads to Wnt signaling pathway inhibition.

It localises to the secreted. The protein localises to the extracellular space. It is found in the extracellular matrix. Functionally, ligand for members of the frizzled family of seven transmembrane receptors. Functions in the canonical Wnt signaling pathway that results in activation of transcription factors of the TCF/LEF family. Required for normal embryonic mesoderm development and formation of caudal somites. Required for normal morphogenesis of the developing neural tube. This is Protein Wnt-3a (WNT-3A) from Pituophis melanoleucus (Pine snake).